Here is a 463-residue protein sequence, read N- to C-terminus: MAANISLQPTSMRDVTKMERIGVHSHIHGLGLDSNLEPRASSQGMIGQGKARKAAGVILKMVQEGRIAGRAILMAGPPSTGKTALAMAMTQTLGSDVPFVMLTASEVFSLEISKTESLTQAFRRAIGVRIKEETELIEGEVVEIQVDRSVTGATKTGRLTLKTTDMETVYDLGSKMIDQLQKEKVLAGDVVSIDKASGRISKLGRSFGRAKDYDAMGADTRFVACPDGELQTRKEVVHTVSLHEIDVINSRTQGFLALFAGDTGEIKPELRAQINGKVAEWREEGKAEIVPGVLFIDEVHMLDIECFSFLNRAMENELAPLVVMASNRGITRIRGTKYKSPHGIPADLLDRMLIISTNRYEEDEMREIVKIRAEEEDVRLSPAALDLLATMGIQTSLRYSLNLIAPSSLLAQRRKSPQTDVEDVRMAYKYFCDVERSAQYAKETSGMMFGETEEINGGMEVDA.

76–83 is a binding site for ATP; the sequence is GPPSTGKT.

Belongs to the RuvB family. As to quaternary structure, may form heterododecamers with RVB1. Component of the SWR1 chromatin remodeling complex, the INO80 chromatin remodeling complex, and of the R2TP complex.

The protein resides in the nucleus. The catalysed reaction is ATP + H2O = ADP + phosphate + H(+). In terms of biological role, DNA helicase which participates in several chromatin remodeling complexes, including the SWR1 and the INO80 complexes. The SWR1 complex mediates the ATP-dependent exchange of histone H2A for the H2A variant HZT1 leading to transcriptional regulation of selected genes by chromatin remodeling. The INO80 complex remodels chromatin by shifting nucleosomes and is involved in DNA repair. Also involved in pre-rRNA processing. The polypeptide is RuvB-like helicase 2 (RVB2) (Cryptococcus neoformans var. neoformans serotype D (strain JEC21 / ATCC MYA-565) (Filobasidiella neoformans)).